A 284-amino-acid polypeptide reads, in one-letter code: 4-diphosphocytidyl-2-C-methyl-D-erythritol kinase (284 aa).

The active site involves Lys17. An ATP-binding site is contributed by 100–110 (PMGGGLGGGSS). Asp142 is a catalytic residue.

Belongs to the GHMP kinase family. IspE subfamily.

The enzyme catalyses 4-CDP-2-C-methyl-D-erythritol + ATP = 4-CDP-2-C-methyl-D-erythritol 2-phosphate + ADP + H(+). The protein operates within isoprenoid biosynthesis; isopentenyl diphosphate biosynthesis via DXP pathway; isopentenyl diphosphate from 1-deoxy-D-xylulose 5-phosphate: step 3/6. In terms of biological role, catalyzes the phosphorylation of the position 2 hydroxy group of 4-diphosphocytidyl-2C-methyl-D-erythritol. The chain is 4-diphosphocytidyl-2-C-methyl-D-erythritol kinase from Aromatoleum aromaticum (strain DSM 19018 / LMG 30748 / EbN1) (Azoarcus sp. (strain EbN1)).